Reading from the N-terminus, the 90-residue chain is Putative membrane protein insertion efficiency factor (90 aa).

It belongs to the UPF0161 family.

Its subcellular location is the cell membrane. Could be involved in insertion of integral membrane proteins into the membrane. This Oceanobacillus iheyensis (strain DSM 14371 / CIP 107618 / JCM 11309 / KCTC 3954 / HTE831) protein is Putative membrane protein insertion efficiency factor.